The following is a 365-amino-acid chain: 3-isopropylmalate dehydrogenase (365 aa).

Positions 96, 106, 134, and 224 each coordinate substrate. Residues Asp224, Asp248, and Asp252 each contribute to the Mg(2+) site. 288–300 provides a ligand contact to NAD(+); that stretch reads GSAPTIAKQNIAN.

This sequence belongs to the isocitrate and isopropylmalate dehydrogenases family. LeuB type 1 subfamily. In terms of assembly, homodimer. Mg(2+) serves as cofactor. It depends on Mn(2+) as a cofactor.

It localises to the cytoplasm. The catalysed reaction is (2R,3S)-3-isopropylmalate + NAD(+) = 4-methyl-2-oxopentanoate + CO2 + NADH. It participates in amino-acid biosynthesis; L-leucine biosynthesis; L-leucine from 3-methyl-2-oxobutanoate: step 3/4. Functionally, catalyzes the oxidation of 3-carboxy-2-hydroxy-4-methylpentanoate (3-isopropylmalate) to 3-carboxy-4-methyl-2-oxopentanoate. The product decarboxylates to 4-methyl-2 oxopentanoate. This chain is 3-isopropylmalate dehydrogenase, found in Dehalococcoides mccartyi (strain ATCC BAA-2266 / KCTC 15142 / 195) (Dehalococcoides ethenogenes (strain 195)).